Consider the following 432-residue polypeptide: Probable N-acetylmuramoyl-L-alanine amidase AmiB (432 aa).

The signal sequence occupies residues 1 to 20 (MKTKILFFLFFSTFSFSIFA). In terms of domain architecture, MurNAc-LAA spans 25-244 (IAIDPGHGGK…IAYMIYEGLV (220 aa)). 2 consecutive LysM domains span residues 292-335 (IRHI…SIKI) and 385-429 (LYHK…KIKL).

It belongs to the N-acetylmuramoyl-L-alanine amidase 3 family.

Its subcellular location is the periplasm. It carries out the reaction Hydrolyzes the link between N-acetylmuramoyl residues and L-amino acid residues in certain cell-wall glycopeptides.. Its function is as follows. Cell-wall hydrolase involved in septum cleavage during cell division. This chain is Probable N-acetylmuramoyl-L-alanine amidase AmiB (amiB), found in Haemophilus influenzae (strain ATCC 51907 / DSM 11121 / KW20 / Rd).